The following is a 62-amino-acid chain: Disintegrin schistatin-like subunit A (62 aa).

The Disintegrin domain occupies 1–62; that stretch reads SVNPCCDPVI…TTDCPRNRYN (62 aa). 4 disulfides stabilise this stretch: Cys5–Cys28, Cys19–Cys25, Cys24–Cys49, and Cys37–Cys56. Positions 41 to 43 match the Cell attachment site motif; sequence RGD.

This sequence belongs to the disintegrin family. Dimeric disintegrin subfamily. In terms of assembly, heterodimer with subunit B; disulfide-linked. As to expression, expressed by the venom gland.

Its subcellular location is the secreted. Its function is as follows. May bind to both alpha-IIb/beta-3 (ITGA2B/ITGB3) and alpha-V/beta-3 (ITGAV/ITGB3) integrins, and may inhibit platelet aggregation. The chain is Disintegrin schistatin-like subunit A from Echis carinatus (Saw-scaled viper).